Consider the following 724-residue polypeptide: Probable serine/threonine-protein kinase KKQ8 (724 aa).

2 disordered regions span residues 1-81 (MVMQ…RQRS) and 93-188 (HPFR…KDIL). A Phosphoserine modification is found at S19. Positions 45–54 (PYRSSSTSPK) are enriched in low complexity. The span at 95–106 (FRQTGSGASNSP) shows a compositional bias: polar residues. Residues 143-162 (RSSSVSSCDSSNGTTSSSDS) show a composition bias toward low complexity. A phosphoserine mark is found at S232, S238, and S241. The interval 329 to 355 (SQTNHEKRTGQSPNDSNRSSPTQGRED) is disordered. A compositionally biased stretch (polar residues) spans 338 to 351 (GQSPNDSNRSSPTQ). In terms of domain architecture, Protein kinase spans 412–712 (GHPVGLVGAG…VGKLLDMQWM (301 aa)). ATP contacts are provided by residues 418-426 (VGAGAYGEV) and K455. The active-site Proton acceptor is D563.

The protein belongs to the protein kinase superfamily. CAMK Ser/Thr protein kinase family. NPR/HAL subfamily. HAL5 sub-subfamily.

It is found in the cytoplasm. It carries out the reaction L-seryl-[protein] + ATP = O-phospho-L-seryl-[protein] + ADP + H(+). The enzyme catalyses L-threonyl-[protein] + ATP = O-phospho-L-threonyl-[protein] + ADP + H(+). This is Probable serine/threonine-protein kinase KKQ8 (KKQ8) from Saccharomyces cerevisiae (strain ATCC 204508 / S288c) (Baker's yeast).